A 272-amino-acid chain; its full sequence is Thymidine phosphorylase (272 aa).

It belongs to the thymidine/pyrimidine-nucleoside phosphorylase family. In terms of assembly, homodimer.

It carries out the reaction thymidine + phosphate = 2-deoxy-alpha-D-ribose 1-phosphate + thymine. In terms of biological role, the enzymes which catalyze the reversible phosphorolysis of pyrimidine nucleosides are involved in the degradation of these compounds and in their utilization as carbon and energy sources, or in the rescue of pyrimidine bases for nucleotide synthesis. This is Thymidine phosphorylase (deoA) from Metamycoplasma hominis (Mycoplasma hominis).